The sequence spans 120 residues: Large ribosomal subunit protein bL20 (120 aa).

Belongs to the bacterial ribosomal protein bL20 family.

Its function is as follows. Binds directly to 23S ribosomal RNA and is necessary for the in vitro assembly process of the 50S ribosomal subunit. It is not involved in the protein synthesizing functions of that subunit. The sequence is that of Large ribosomal subunit protein bL20 from Cereibacter sphaeroides (strain ATCC 17025 / ATH 2.4.3) (Rhodobacter sphaeroides).